The primary structure comprises 495 residues: Cytochrome P450 94C1 (495 aa).

The helical transmembrane segment at 2–22 threads the bilayer; that stretch reads LLIISFTIVSFFFIIIFSLFH. Cys439 serves as a coordination point for heme.

This sequence belongs to the cytochrome P450 family. Heme serves as cofactor.

Its subcellular location is the membrane. The protein localises to the endoplasmic reticulum membrane. It catalyses the reaction a 12-hydroxyjasmonyl-L-alpha-amino acid + 2 reduced [NADPH--hemoprotein reductase] + 2 O2 = a 12-hydroxy-12-oxojasmonyl-L-alpha-amino acid + 2 oxidized [NADPH--hemoprotein reductase] + 3 H2O + 3 H(+). Functionally, involved in the oxidation of the plant hormone jasmonoyl-L-isoleucine (JA-Ile), a bioactive phytohormone of the jasmonate-mediated signaling pathway. Converts 12-hydroxy-JA-Ile (12OH-JA-Ile) to the carboxy-derivative 12COOH-JA-Ile. Exerts negative feedback control on JA-Ile levels and plays a role in attenuation of jasmonate responses. Also functions as in-chain fatty acids hydroxylase in vitro. Catalyzes the hydroxylation of 12-hydroxy-jasmonoyl-L-phenylalanine (12OH-JA-Phe) in vitro. Converts 12OH-JA-Phe to the carboxy-derivative 12COOH-JA-Phe. The sequence is that of Cytochrome P450 94C1 from Arabidopsis thaliana (Mouse-ear cress).